Here is a 208-residue protein sequence, read N- to C-terminus: Redox-sensing transcriptional repressor Rex (208 aa).

The H-T-H motif DNA-binding region spans 18 to 57 (IYYRYFKLLETDGIERIKSEQLAKLVAIPSATIRRDFSYI). 92–97 (GVGNLG) lines the NAD(+) pocket.

It belongs to the transcriptional regulatory Rex family. As to quaternary structure, homodimer.

It localises to the cytoplasm. In terms of biological role, modulates transcription in response to changes in cellular NADH/NAD(+) redox state. The chain is Redox-sensing transcriptional repressor Rex from Latilactobacillus sakei subsp. sakei (strain 23K) (Lactobacillus sakei subsp. sakei).